Here is a 420-residue protein sequence, read N- to C-terminus: L-rhamnose isomerase (420 aa).

Histidine 264, aspartate 296, and aspartate 298 together coordinate Mn(2+).

The protein belongs to the rhamnose isomerase family. Requires Mn(2+) as cofactor.

The protein resides in the cytoplasm. It catalyses the reaction L-rhamnopyranose = L-rhamnulose. The protein operates within carbohydrate degradation; L-rhamnose degradation; glycerone phosphate from L-rhamnose: step 1/3. Its function is as follows. Catalyzes the interconversion of L-rhamnose and L-rhamnulose. This Listeria monocytogenes serovar 1/2a (strain ATCC BAA-679 / EGD-e) protein is L-rhamnose isomerase.